Consider the following 250-residue polypeptide: Small ribosomal subunit protein uS2 (250 aa).

The protein belongs to the universal ribosomal protein uS2 family.

This chain is Small ribosomal subunit protein uS2, found in Delftia acidovorans (strain DSM 14801 / SPH-1).